We begin with the raw amino-acid sequence, 1202 residues long: Voltage-gated inwardly rectifying potassium channel KCNH6 (1202 aa).

Over 1-405 (MGSAALPHAR…YSPFKAVWDW (405 aa)) the chain is Cytoplasmic. The PAS domain occupies 36 to 84 (IIYCNDGFCEMFGYSRVEVMQRPCTCDFLTGPDTTKSSIAQLTQALLGS). The PAC domain occupies 87–139 (CKLEILYYRKDTSCFRCLVDVVPVKNEDGVVIMFILNFEDLAQLIAKSSGRSL). Disordered stretches follow at residues 203 to 243 (ENCV…LGPR) and 285 to 315 (ERRANSEGGMGLSGKASHVKPNPPNSTSDSD). The span at 213-222 (LLEKERRPSL) shows a compositional bias: basic and acidic residues. Residues 406–426 (LILLLVIYTAVFTPYSAAFLL) traverse the membrane as a helical segment. Over 427 to 443 (NEEQGEEKHWNCSYSCD) the chain is Extracellular. N-linked (GlcNAc...) asparagine glycosylation is present at Asn437. The chain crosses the membrane as a helical span at residues 444-464 (PLNIIDLIVDIMFIVDIVINF). The Cytoplasmic portion of the chain corresponds to 465 to 485 (RTTYVNINDEVVSHPGKIAIH). The helical transmembrane segment at 486–506 (YFKGWFLIDMVAAIPFDLLIF) threads the bilayer. Over 507 to 515 (RSGSDETTT) the chain is Extracellular. The helical; Voltage-sensor transmembrane segment at 516–536 (LIGLLKTARLLRLVRVARKLD) threads the bilayer. Over 537 to 543 (RYSEYGA) the chain is Cytoplasmic. Residues 544–564 (AVLFLLMCTFALIAHWLACIW) form a helical membrane-spanning segment. The Extracellular portion of the chain corresponds to 565–608 (YAIGNVERPYMEHKIGWLDNLGDQIGKRYNDSDLSSGPSIKDKY). Asn594 is a glycosylation site (N-linked (GlcNAc...) asparagine). Positions 609–629 (VTALYFTFSSLTSVGFGNVSP) form an intramembrane region, pore-forming. The Selectivity filter motif lies at 621–626 (SVGFGN). Topologically, residues 630–635 (NTNSEK) are extracellular. The helical transmembrane segment at 636–656 (IFSICVMLIGSLMYASIFGNV) threads the bilayer. The Cytoplasmic segment spans residues 657–1202 (SAIIQRLYSG…HLSDPVLPGS (546 aa)). Positions 739-839 (AFRGASKGCL…IQREDLLEVL (101 aa)) are cNMP-binding domain. Disordered regions lie at residues 912–948 (LTNPQDPLSKDQWDDVGSSTTPCSQTSDDEAKPGSPT), 1092–1112 (TPCAPLEDEQQTAPGQSPSYA), and 1140–1202 (TVYS…LPGS). Residues 928 to 937 (GSSTTPCSQT) are compositionally biased toward polar residues. Residues 1179–1195 (EHLEASSEHQDIQRHLS) are compositionally biased toward basic and acidic residues.

Belongs to the potassium channel family. H (Eag) (TC 1.A.1.20) subfamily. Kv11.2/KCNH6 sub-subfamily. In terms of assembly, the potassium channel is probably composed of a homo- or heterotetrameric complex of pore-forming alpha subunits that can associate only within their subfamily.

The protein resides in the cell membrane. The catalysed reaction is K(+)(in) = K(+)(out). In terms of biological role, pore-forming (alpha) subunit of voltage-gated inwardly rectifying potassium channel. Characterized by unusual gating kinetics by producing relatively small outward currents during membrane depolarization and large inward currents during subsequent repolarization which reflect a rapid inactivation during depolarization and quick recovery from inactivation but slow deactivation (closing) during repolarization. Activates even more slowly than KCNH2. The protein is Voltage-gated inwardly rectifying potassium channel KCNH6 of Gallus gallus (Chicken).